The sequence spans 102 residues: uncharacterized protein (102 aa).

Residues 48–102 (LNDKRKSLGIELSMLELQTGVSISTLNRLFQDPSQVRFTTVFLVAQTLGVSLCAI) form the HTH cro/C1-type domain. The H-T-H motif DNA-binding region spans 59–78 (LSMLELQTGVSISTLNRLFQ).

This is an uncharacterized protein from Haemophilus influenzae (strain ATCC 51907 / DSM 11121 / KW20 / Rd).